A 234-amino-acid polypeptide reads, in one-letter code: Probable transcriptional regulatory protein PFL_3960 (234 aa).

The protein belongs to the TACO1 family.

The protein localises to the cytoplasm. The chain is Probable transcriptional regulatory protein PFL_3960 from Pseudomonas fluorescens (strain ATCC BAA-477 / NRRL B-23932 / Pf-5).